We begin with the raw amino-acid sequence, 373 residues long: DNA dC-&gt;dU-editing enzyme APOBEC-3F (373 aa).

2 CMP/dCMP-type deaminase domains span residues 29–137 (RRNT…LCRL) and 174–321 (DDNY…LRSL). Lys52 participates in a covalent cross-link: (Microbial infection) Glycyl lysine isopeptide (Lys-Gly) (interchain with G-Cter in ubiquitin). The Zn(2+) site is built by His65, Cys96, and Cys99. Lys234 participates in a covalent cross-link: (Microbial infection) Glycyl lysine isopeptide (Lys-Gly) (interchain with G-Cter in ubiquitin). Residue His249 participates in Zn(2+) binding. The Proton donor role is filled by Glu251. Zn(2+)-binding residues include Cys280 and Cys283. A disulfide bridge connects residues Cys280 and Cys283. Residues Lys334, Lys352, Lys355, and Lys358 each participate in a (Microbial infection) Glycyl lysine isopeptide (Lys-Gly) (interchain with G-Cter in ubiquitin) cross-link.

It belongs to the cytidine and deoxycytidylate deaminase family. As to quaternary structure, homodimer. Interacts with APOBEC3G in an RNA-dependent manner. Interacts with AGO1, AGO2 and AGO3. In terms of assembly, (Microbial infection) Interacts with HIV-1 Vif, leading to its ubiquitination and degradation by the proteasome. In the absence of Vif protein, specifically packaged into HIV-1 virions. It depends on Zn(2+) as a cofactor. (Microbial infection) Following infection by HIV-1, ubiquitinated by a cullin-5-RING E3 ubiquitin-protein ligase complex (ECS complex) hijacked by the HIV-1 Vif protein, leading to its degradation. Widely expressed. Highly expressed in ovary.

The protein localises to the cytoplasm. It localises to the P-body. The enzyme catalyses a 2'-deoxycytidine in single-stranded DNA + H2O + H(+) = a 2'-deoxyuridine in single-stranded DNA + NH4(+). Its activity is regulated as follows. (Microbial infection) Antiviral activity is neutralized by the HIV-1 virion infectivity factor (Vif), that prevents its incorporation into progeny virions by both inhibiting its translation and/or by inducing its ubiquitination and subsequent degradation by the 26S proteasome. In terms of biological role, DNA deaminase (cytidine deaminase) which acts as an inhibitor of retrovirus replication and retrotransposon mobility via deaminase-dependent and -independent mechanisms. Exhibits antiviral activity against viruse such as HIV-1 or HIV-2. After the penetration of retroviral nucleocapsids into target cells of infection and the initiation of reverse transcription, it can induce the conversion of cytosine to uracil in the minus-sense single-strand viral DNA, leading to G-to-A hypermutations in the subsequent plus-strand viral DNA. The resultant detrimental levels of mutations in the proviral genome, along with a deamination-independent mechanism that works prior to the proviral integration, together exert efficient antiretroviral effects in infected target cells. Selectively targets single-stranded DNA and does not deaminate double-stranded DNA or single- or double-stranded RNA. Exhibits antiviral activity also against hepatitis B virus (HBV), equine infectious anemia virus (EIAV), xenotropic MuLV-related virus (XMRV) and simian foamy virus (SFV) and may inhibit the mobility of LTR and non-LTR retrotransposons. May also play a role in the epigenetic regulation of gene expression through the process of active DNA demethylation. This is DNA dC-&gt;dU-editing enzyme APOBEC-3F from Homo sapiens (Human).